The following is a 305-amino-acid chain: Putative S-adenosyl-L-methionine-dependent methyltransferase MAB_3787 (305 aa).

Residues Asp-132 and Asp-161–Leu-162 each bind S-adenosyl-L-methionine.

This sequence belongs to the UPF0677 family.

Functionally, exhibits S-adenosyl-L-methionine-dependent methyltransferase activity. In Mycobacteroides abscessus (strain ATCC 19977 / DSM 44196 / CCUG 20993 / CIP 104536 / JCM 13569 / NCTC 13031 / TMC 1543 / L948) (Mycobacterium abscessus), this protein is Putative S-adenosyl-L-methionine-dependent methyltransferase MAB_3787.